The chain runs to 430 residues: Probable beta-1,3-galactosyl-O-glycosyl-glycoprotein beta-1,6-N-acetylglucosaminyltransferase 7 (430 aa).

The Cytoplasmic segment spans residues 1-8; sequence MSQLRATK. The helical; Signal-anchor for type II membrane protein transmembrane segment at 9 to 25 threads the bilayer; it reads SGLVVRAVICIFIFLYL. The Extracellular segment spans residues 26 to 430; it reads RNPTPAESEE…QSHFNMRLNR (405 aa). Cystine bridges form between C53/C205, C139/C354, C160/C187, and C363/C395. N87 carries an N-linked (GlcNAc...) asparagine glycan. An N-linked (GlcNAc...) asparagine glycan is attached at N272.

Belongs to the glycosyltransferase 14 family.

Its subcellular location is the golgi apparatus membrane. It participates in protein modification; protein glycosylation. Functionally, probable glycosyltransferase. In Homo sapiens (Human), this protein is Probable beta-1,3-galactosyl-O-glycosyl-glycoprotein beta-1,6-N-acetylglucosaminyltransferase 7.